The following is a 428-amino-acid chain: Keratin, type I cytoskeletal 18-A (428 aa).

The tract at residues 2 to 78 is head; sequence SSSRSVYSSS…NVNLFGGVQN (77 aa). Residues 24-45 form a disordered region; sequence SAPRFTPGSSAASVHAGAGGSG. The segment at 79 to 114 is coil 1A; that stretch reads EKETMQDLNDRLASYLERVRSLESANKKLEVQIRQH. Residues 79–389 form the IF rod domain; it reads EKETMQDLND…RLLEGDSFDL (311 aa). The segment at 115-130 is linker 1; it reads TEKKGPAKDWSPYYMT. Residues 131–222 are coil 1B; the sequence is IEDLKKQVFN…KNHQDDVNEL (92 aa). The linker 12 stretch occupies residues 223–246; that stretch reads QAQIASSAVTVEVDAPKSQDLGKI. The interval 247 to 384 is coil 2; that stretch reads MADLRAQYDE…IQTYRRLLEG (138 aa). The segment at 385–428 is tail; the sequence is DSFDLQDAVPVVTTQTVKKVITTTQRLVDGKVVAESNNTEVIKS.

Belongs to the intermediate filament family. Heterotetramer of two type I and two type II keratins. Keratin-18 associates with keratin-8. Post-translationally, proteolytically cleaved by caspases during epithelial cell apoptosis. As to expression, expressed at high levels in notochord and low levels in adult liver.

Functionally, when phosphorylated, plays a role in filament reorganization. This Xenopus laevis (African clawed frog) protein is Keratin, type I cytoskeletal 18-A (krt18-a).